The primary structure comprises 253 residues: MATAKTIDLTGKAVGEVELPAVFDADYRPDLIKKAVLAAQANRLQPYGPRLYSGMETSARGWGSGRGVSHVPRLVNSSRAARVPHAKGGRRAHPPKPEADRSEKVNTKERRYAIRSAIAATTDPTLVSLRGHIFEAELPIVAVNDLESLERTKQVIEFLEAAGLYEDVLRAKYGRHIRAGRGKLRGRKYKHKKSVLIVAGENTPILKAARNLSGVDVVTVDSLNAELLAPGTHAGRLTVWTESAIGKLEGAFQ.

Positions 78–107 (SRAARVPHAKGGRRAHPPKPEADRSEKVNT) are disordered. The span at 82 to 94 (RVPHAKGGRRAHP) shows a compositional bias: basic residues. Over residues 95-107 (PKPEADRSEKVNT) the composition is skewed to basic and acidic residues.

This sequence belongs to the universal ribosomal protein uL4 family. As to quaternary structure, part of the 50S ribosomal subunit.

Functionally, one of the primary rRNA binding proteins, this protein initially binds near the 5'-end of the 23S rRNA. It is important during the early stages of 50S assembly. It makes multiple contacts with different domains of the 23S rRNA in the assembled 50S subunit and ribosome. Forms part of the polypeptide exit tunnel. The polypeptide is Large ribosomal subunit protein uL4 (Methanosarcina acetivorans (strain ATCC 35395 / DSM 2834 / JCM 12185 / C2A)).